A 674-amino-acid polypeptide reads, in one-letter code: MGNGVTTLTGCCTGTLAGEISRRYDVSLVHDGLGHSFCYIRPDLPGVVLPSPESPLRSDHIQETTFRSISGASVSANPSTALSGALSSDSDCPYSSAVSASAFESSGNFASLPLQPVPRGSTWQSGPIVNESGLGSAPFERRFLSGPIESGLYSGPIESTKKTEKEKPKKIRKKPKSKKNFLTFKTLFANLISNNNKPRLKKSVIEPINGSDSSDSGRLHHEPVITSSRSNENPKSDLEEEDEKQSMNSVLDVQWAQGKAGEDRVHVVVSEDNGWVFVGIYDGFSGPDAPDYLLNNLYTAVQKELNGLLWNDEKLRSLGENGMTKTGKCSDEEDPESGKENCPVINNDDAVASGARNQAKSLKWRCEWEKKSNNKTKSDNRCDQKGSNSTTTNHKDVLKALLQALRKTEDAYLELADQMVKENPELALMGSCVLVTLMKGEDVYVMNVGDSRAVLGRKPNLATGRKRQKELERIREDSSLEDKEILMNGAMRNTLVPLQLNMEHSTRIEEEVRRIKKEHPDDDCAVENDRVKGYLKVTRAFGAGFLKQPKWNDALLEMFRIDYIGTSPYITCSPSLCHHKLTSRDKFLILSSDGLYEYFSNQEAIFEVESFISAFPEGDPAQHLIQEVLLRAANKFGMDFHELLEIPQGDRRRYHDDVSVIVISLEGRIWRSSM.

Position 125 is a phosphoserine (Ser125). Disordered stretches follow at residues 153-175 and 202-247; these read YSGP…RKKP and KSVI…KQSM. The PPM-type phosphatase domain occupies 244 to 665; the sequence is KQSMNSVLDV…DDVSVIVISL (422 aa). Asp282 and Gly283 together coordinate Mn(2+). Positions 373-384 are enriched in basic and acidic residues; sequence NNKTKSDNRCDQ. The segment at 373-392 is disordered; the sequence is NNKTKSDNRCDQKGSNSTTT. The Mn(2+) site is built by Asp593 and Asp656.

The protein belongs to the PP2C family. The cofactor is Mg(2+). Mn(2+) is required as a cofactor. Expressed at low level in seedlings, roots, leaves, stems, young inflorescences, flowers and siliques.

The protein localises to the nucleus. It catalyses the reaction O-phospho-L-seryl-[protein] + H2O = L-seryl-[protein] + phosphate. It carries out the reaction O-phospho-L-threonyl-[protein] + H2O = L-threonyl-[protein] + phosphate. The protein is Probable protein phosphatase 2C 66 (PLL2) of Arabidopsis thaliana (Mouse-ear cress).